The chain runs to 112 residues: ATP synthase epsilon chain (112 aa).

Belongs to the ATPase epsilon chain family. In terms of assembly, F-type ATPases have 2 components, CF(1) - the catalytic core - and CF(0) - the membrane proton channel. CF(1) has five subunits: alpha(3), beta(3), gamma(1), delta(1), epsilon(1). CF(0) has three main subunits: a, b and c.

It is found in the cell inner membrane. Its function is as follows. Produces ATP from ADP in the presence of a proton gradient across the membrane. The polypeptide is ATP synthase epsilon chain (Rickettsia peacockii (strain Rustic)).